Here is a 344-residue protein sequence, read N- to C-terminus: Dihydroorotase (344 aa).

The Zn(2+) site is built by His13 and His15. Substrate is bound by residues 15–17 (HFR) and Asn41. Zn(2+) is bound by residues Lys98, His135, and His173. An N6-carboxylysine modification is found at Lys98. His135 is a substrate binding site. Leu218 is a substrate binding site. Asp246 is a binding site for Zn(2+). Residue Asp246 is part of the active site. Residues His250 and Ala262 each contribute to the substrate site.

The protein belongs to the metallo-dependent hydrolases superfamily. DHOase family. Class II DHOase subfamily. In terms of assembly, homodimer. Requires Zn(2+) as cofactor.

It catalyses the reaction (S)-dihydroorotate + H2O = N-carbamoyl-L-aspartate + H(+). It functions in the pathway pyrimidine metabolism; UMP biosynthesis via de novo pathway; (S)-dihydroorotate from bicarbonate: step 3/3. Functionally, catalyzes the reversible cyclization of carbamoyl aspartate to dihydroorotate. This Shewanella sediminis (strain HAW-EB3) protein is Dihydroorotase.